The following is a 151-amino-acid chain: Mitochondrial intermembrane space import and assembly protein 40 homolog (151 aa).

Positions 1 to 35 are disordered; that stretch reads MGQGLSQPAQAVEEPSPPAVEAAPSSSPSPAPAPS. Residues 7-26 show a composition bias toward low complexity; sequence QPAQAVEEPSPPAVEAAPSS. Intrachain disulfides connect Cys65/Cys67, Cys76/Cys109, and Cys86/Cys99. Residues 73 to 117 enclose the CHCH domain; the sequence is NGPCGSQFVDAFSCFLKSTEEEKGSDCVKPFIALQDCIKINPEAF. 2 consecutive short sequence motifs (cx9C motif) follow at residues 76-86 and 99-109; these read CGSQFVDAFSC and CVKPFIALQDC. A disordered region spans residues 123–151; that stretch reads EEEENDEEAEKSNLKVRAPAWSRESKPKL.

Its subcellular location is the mitochondrion intermembrane space. The protein localises to the peroxisome matrix. Required for the import and folding of small cysteine-containing proteins in the mitochondrial intermembrane space. The sequence is that of Mitochondrial intermembrane space import and assembly protein 40 homolog from Oryza sativa subsp. japonica (Rice).